The primary structure comprises 574 residues: Lipase maturation factor 1 (574 aa).

The segment at 1–39 (MRPDSLVMAAPEGSLRKRKVGGAEHSPASQPSLARDPAD) is disordered. The Cytoplasmic portion of the chain corresponds to 1-49 (MRPDSLVMAAPEGSLRKRKVGGAEHSPASQPSLARDPADSPARLHTGTF). A helical transmembrane segment spans residues 50–72 (WLTRIVLLRALAFIYFVAFLVAF). At 73–127 (NQNKALIGDRGLLPCKLYLKNVQEYFQGSTGWAAWTYAPTIMWLLDWSDMNFNLD) the chain is on the lumenal side. The chain crosses the membrane as a helical span at residues 128 to 151 (LIALLGLGISSFVLVTGCANMILM). Over 152 to 207 (TALWALYMSLVNVGQIWYSFGWESQLLETGFLGIFLSPLWTLSRLPKNTPTSQIVL) the chain is Cytoplasmic. Residues 208 to 221 (WGFRWLIFRIMLGA) traverse the membrane as a helical segment. Topologically, residues 222–292 (GLIKVRGDKC…LGRRMRILHG (71 aa)) are lumenal. The helical transmembrane segment at 293–321 (VLQILFQVILIISGNLSFLNWLTIVPSLA) threads the bilayer. Residues 322–367 (CFDDAALGFLFPSGPQGLKKQVLEIQREDTQRVQPKPRDRGCLVRQ) are Cytoplasmic-facing. A helical membrane pass occupies residues 368–388 (VVNISLGILVAWLSVPVVINL). The Lumenal segment spans residues 389–574 (LSSRQIMNTS…LPEPPSRHTR (186 aa)).

The protein belongs to the lipase maturation factor family. As to quaternary structure, interacts with LPL and SEL1L. Expressed in all tissues synthesizing lipoprotein lipase (Lpl) and hepatic lipase (Lipc), including adipose tissue, skeletal muscle, heart, and liver. Expressed at higher levels in tissues that express little or no lipase activity such as testis and pancreas suggesting additional functions in these tissues.

Its subcellular location is the endoplasmic reticulum membrane. Its function is as follows. Involved in the maturation of specific proteins in the endoplasmic reticulum. Required for maturation and transport of active lipoprotein lipase (LPL) through the secretory pathway. Each LMF1 molecule chaperones 50 or more molecules of LPL. This chain is Lipase maturation factor 1 (Lmf1), found in Mus musculus (Mouse).